A 460-amino-acid chain; its full sequence is ATP synthase subunit beta (460 aa).

149-156 (GGAGVGKT) contacts ATP.

Belongs to the ATPase alpha/beta chains family. F-type ATPases have 2 components, CF(1) - the catalytic core - and CF(0) - the membrane proton channel. CF(1) has five subunits: alpha(3), beta(3), gamma(1), delta(1), epsilon(1). CF(0) has three main subunits: a(1), b(2) and c(9-12). The alpha and beta chains form an alternating ring which encloses part of the gamma chain. CF(1) is attached to CF(0) by a central stalk formed by the gamma and epsilon chains, while a peripheral stalk is formed by the delta and b chains.

It localises to the cell inner membrane. It carries out the reaction ATP + H2O + 4 H(+)(in) = ADP + phosphate + 5 H(+)(out). Functionally, produces ATP from ADP in the presence of a proton gradient across the membrane. The catalytic sites are hosted primarily by the beta subunits. In Nitrosomonas europaea (strain ATCC 19718 / CIP 103999 / KCTC 2705 / NBRC 14298), this protein is ATP synthase subunit beta.